A 139-amino-acid chain; its full sequence is Histone H2B (139 aa).

The segment covering 1-10 has biased composition (basic and acidic residues); it reads MAPKAAEKKP. Positions 1-47 are disordered; that stretch reads MAPKAAEKKPSTGGKAPAGGKAPAEKKEAGKKTAASGEKKKRTKARK. An N6-acetyllysine; alternate mark is found at Lys-8 and Lys-9. Residues Lys-8 and Lys-9 each participate in a glycyl lysine isopeptide (Lys-Gly) (interchain with G-Cter in SUMO); alternate cross-link. The segment covering 11–22 has biased composition (low complexity); that stretch reads STGGKAPAGGKA. Lys-15 is modified (N6-acetyllysine). Lys-26 bears the N6-acetyllysine; alternate mark. Residue Lys-26 forms a Glycyl lysine isopeptide (Lys-Gly) (interchain with G-Cter in SUMO); alternate linkage. Lys-27 is covalently cross-linked (Glycyl lysine isopeptide (Lys-Gly) (interchain with G-Cter in SUMO)). Lys-133 is covalently cross-linked (Glycyl lysine isopeptide (Lys-Gly) (interchain with G-Cter in ubiquitin)).

This sequence belongs to the histone H2B family. As to quaternary structure, the nucleosome is a histone octamer containing two molecules each of H2A, H2B, H3 and H4 assembled in one H3-H4 heterotetramer and two H2A-H2B heterodimers. The octamer wraps approximately 147 bp of DNA. Post-translationally, monoubiquitinated by the UBC2-BRE1 complex to form H2BK123ub1. H2BK123ub1 gives a specific tag for epigenetic transcriptional activation and is also prerequisite for H3K4me and H3K79me formation. H2BK123ub1 also modulates the formation of double-strand breaks during meiosis and is a prerequisite for DNA-damage checkpoint activation. In terms of processing, acetylated by GCN5 to form H2BK11ac and H2BK16ac. H2BK16ac can also be formed by ESA1. Acetylation of N-terminal lysines and particularly formation of H2BK11acK16ac has a positive effect on transcription. Sumoylation to form H2BK6su or H2BK7su, and probably also H2BK16su or H2BK17su, occurs preferentially near the telomeres and represses gene transcription.

The protein localises to the nucleus. Its subcellular location is the chromosome. Its function is as follows. Core component of nucleosome. Nucleosomes wrap and compact DNA into chromatin, limiting DNA accessibility to the cellular machineries which require DNA as a template. Histones thereby play a central role in transcription regulation, DNA repair, DNA replication and chromosomal stability. DNA accessibility is regulated via a complex set of post-translational modifications of histones, also called histone code, and nucleosome remodeling. This chain is Histone H2B (HTB1), found in Coccidioides immitis (strain RS) (Valley fever fungus).